The chain runs to 541 residues: Glutamyl-tRNA(Gln) amidotransferase subunit B, mitochondrial (541 aa).

The protein belongs to the GatB/GatE family. GatB subfamily. Subunit of the heterotrimeric GatFAB amidotransferase (AdT) complex, composed of A, B and F subunits.

The protein localises to the mitochondrion. The enzyme catalyses L-glutamyl-tRNA(Gln) + L-glutamine + ATP + H2O = L-glutaminyl-tRNA(Gln) + L-glutamate + ADP + phosphate + H(+). Allows the formation of correctly charged Gln-tRNA(Gln) through the transamidation of misacylated Glu-tRNA(Gln) in the mitochondria. The reaction takes place in the presence of glutamine and ATP through an activated gamma-phospho-Glu-tRNA(Gln). In Saccharomyces cerevisiae (strain RM11-1a) (Baker's yeast), this protein is Glutamyl-tRNA(Gln) amidotransferase subunit B, mitochondrial.